The sequence spans 126 residues: Glycine cleavage system H protein (126 aa).

In terms of domain architecture, Lipoyl-binding spans 21–103 (TVTVGISNHA…YEGGWIARIK (83 aa)). Lysine 62 is modified (N6-lipoyllysine).

The protein belongs to the GcvH family. In terms of assembly, the glycine cleavage system is composed of four proteins: P, T, L and H. Requires (R)-lipoate as cofactor.

Functionally, the glycine cleavage system catalyzes the degradation of glycine. The H protein shuttles the methylamine group of glycine from the P protein to the T protein. In Aliivibrio salmonicida (strain LFI1238) (Vibrio salmonicida (strain LFI1238)), this protein is Glycine cleavage system H protein.